Consider the following 33-residue polypeptide: Brevinin-2E (33 aa).

Cysteine 27 and cysteine 33 are oxidised to a cystine.

Belongs to the frog skin active peptide (FSAP) family. Brevinin subfamily. In terms of tissue distribution, expressed by the skin glands.

It localises to the secreted. Shows antibacterial activity against representative Gram-negative and Gram-positive bacterial species, and hemolytic activity. In Pelophylax lessonae (Pool frog), this protein is Brevinin-2E.